A 51-amino-acid polypeptide reads, in one-letter code: MGQKIRKCKNCGRYTLREICPVCGGKPFSPNPARFSPKDPYGRYRRMAKKG.

It belongs to the NOP10 family.

In terms of biological role, involved in ribosome biogenesis; more specifically in 18S rRNA pseudouridylation and in cleavage of pre-rRNA. The polypeptide is Ribosome biogenesis protein Nop10 (Methanosarcina barkeri (strain Fusaro / DSM 804)).